A 64-amino-acid chain; its full sequence is Bowman-Birk type trypsin inhibitor TI1 (64 aa).

Disulfide bonds link cysteine 9/cysteine 61, cysteine 10/cysteine 25, cysteine 15/cysteine 23, cysteine 32/cysteine 39, and cysteine 36/cysteine 49.

It belongs to the Bowman-Birk serine protease inhibitor family.

This Coix lacryma-jobi (Job's tears) protein is Bowman-Birk type trypsin inhibitor TI1.